The sequence spans 249 residues: MNLVQDKVTIITGGTRGIGFAAAKIFIDNGAKVSIFGETQEEVDTALAQLKELYPEEEVLGFAPDLTSRDAVMAAVGQVAQKYGRLDVMINNAGITSNNVFSRVSEEEFKHIMDINVTGVFNGAWCAYQCMKDAKKGVIINTASVTGIFGSLSGVGYPASKASVIGLTHGLGREIIRKNIRVVGVAPGVVNTDMTNGNPPEIMEGYLKALPMKRMLEPEEIANVYLFLASDLASGITATTVSVDGAYRP.

Residues 15-18 (TRGI), Glu38, Glu42, and Asn92 each bind NAD(+). A substrate-binding site is contributed by Ser144. Active-site proton donor/acceptor residues include Tyr157 and Lys161. NAD(+) is bound by residues Lys161 and 190-192 (VNT).

Belongs to the short-chain dehydrogenases/reductases (SDR) family. As to quaternary structure, homotetramer.

It catalyses the reaction a 3alpha-hydroxy bile acid CoA + NAD(+) = a 3-oxo bile acid CoA + NADH + H(+). The catalysed reaction is choloyl-CoA + NAD(+) = 7alpha,12alpha-dihydroxy-3-oxochol-24-oyl-CoA + NADH + H(+). It carries out the reaction chenodeoxycholoyl-CoA + NAD(+) = 7alpha-hydroxy-3-oxochol-24-oyl-CoA + NADH + H(+). The enzyme catalyses deoxycholoyl-CoA + NAD(+) = 12alpha-hydroxy-3-oxocholan-24-oyl-CoA + NADH + H(+). It catalyses the reaction lithocholoyl-CoA + NAD(+) = 3-oxocholan-24-oyl-CoA + NADH + H(+). The protein operates within lipid metabolism; bile acid biosynthesis. In terms of biological role, involved in the multi-step bile acid 7alpha-dehydroxylation pathway that transforms primary bile acids to secondary bile acids in the human gut. Catalyzes the oxidation of C3-hydroxyl group of CoA conjugated bile acids generating a C3-oxo bile acid intermediate. Can use choloyl-CoA, chenodeoxycholoyl-CoA, deoxycholoyl-CoA, and lithocholoyl-CoA as substrates with similar efficiency. Highly prefers NAD over NADP as cosubstrate. Also catalyzes the reverse reactions; in vitro, the preferred direction of reaction depends on the pH. Has very little activity with unconjugated (non-CoA) bile acid substrates. This is 3alpha-hydroxy bile acid-CoA-ester 3-dehydrogenase 2 (baiA2) from Clostridium scindens (strain JCM 10418 / VPI 12708).